The primary structure comprises 414 residues: Methanesulfonate monooxygenase hydroxylase subunit alpha (414 aa).

Positions 44–163 constitute a Rieske domain; that stretch reads WVPFRHESEL…CEVKFGGFVW (120 aa). Residues Cys86, His88, Cys115, and His118 each contribute to the [2Fe-2S] cluster site. His225 contributes to the Fe cation binding site.

It belongs to the bacterial ring-hydroxylating dioxygenase alpha subunit family. The MSA monooxygenase system consists of 4 proteins: the 2 subunits of the hydroxylase component (MsmA and MsmB), a ferredoxin (MsmC) and a ferredoxin reductase (MsmD). The hydroxylase component consists of a 3 alpha (MsmA) and 3 beta (MsmB) subunits. [2Fe-2S] cluster is required as a cofactor. Requires Fe cation as cofactor.

Its subcellular location is the cytoplasm. The enzyme catalyses methanesulfonate + NADH + O2 = sulfite + formaldehyde + NAD(+) + H2O. With respect to regulation, MSAMO is inhibited by metal chelators (such as bathophenanthroline, bathocuprione, neocuprione, alpha-alpha-dipyridil and sodium EDTA) and by sodium azide, sodium arsenate and potassium cyanide. Functionally, methanesulfonate monooxygenase (MSAMO) mediates the primary degradation of methanesulfonic acid (MSA) to produce formaldehyd and inorganic sulfite by initial hydroxylation of the carbon atom prior to spontaneous cleavage of the unstable hydroxymethanesulfonic acid. MSAMO has a restricted substrate range that includes only the short-chain aliphatic sulfonates (methane- to butanesulfonate) and excludes all larger molecules, such as arylsulfonates and aromatic sulfonates. All MSAMO components are required for enzyme activity. This is Methanesulfonate monooxygenase hydroxylase subunit alpha from Methylosulfonomonas methylovora.